We begin with the raw amino-acid sequence, 190 residues long: UPF0301 protein DP2218 (190 aa).

Belongs to the UPF0301 (AlgH) family.

The protein is UPF0301 protein DP2218 of Desulfotalea psychrophila (strain LSv54 / DSM 12343).